A 311-amino-acid chain; its full sequence is Probable manganese-dependent inorganic pyrophosphatase (311 aa).

Mn(2+) contacts are provided by H9, D13, D15, D77, H99, and D151.

It belongs to the PPase class C family. Mn(2+) serves as cofactor.

The protein localises to the cytoplasm. The catalysed reaction is diphosphate + H2O = 2 phosphate + H(+). This Streptococcus equi subsp. equi (strain 4047) protein is Probable manganese-dependent inorganic pyrophosphatase.